A 215-amino-acid chain; its full sequence is MKQNRKNLPIILASSSPARIELLNRIKIIPSQIIPADIDETPNLRELPAPLAIRLAYEKAIKIASQIEESAIIIAADTVAAVGRRILPKATTYEEVKNCIKMLSGRRHRVYTGLCIIKKENDQLTVRQKIVQTIVKFKKLSDEEINFYCSLDEGIDKAGGCKISGYAEAFISFISGSYSNVMGLPLFETVNALTSLGFRCSSIMPAKMNYCHSAT.

Aspartate 77 (proton acceptor) is an active-site residue.

The protein belongs to the Maf family. The cofactor is a divalent metal cation.

The protein localises to the cytoplasm. The catalysed reaction is a ribonucleoside 5'-triphosphate + H2O = a ribonucleoside 5'-phosphate + diphosphate + H(+). It carries out the reaction a 2'-deoxyribonucleoside 5'-triphosphate + H2O = a 2'-deoxyribonucleoside 5'-phosphate + diphosphate + H(+). Nucleoside triphosphate pyrophosphatase. May have a dual role in cell division arrest and in preventing the incorporation of modified nucleotides into cellular nucleic acids. The sequence is that of Nucleoside triphosphate pyrophosphatase from Rickettsia peacockii (strain Rustic).